A 45-amino-acid polypeptide reads, in one-letter code: Mu-conotoxin-like Cal 12.1.1d (45 aa).

Intrachain disulfides connect Cys-3–Cys-16, Cys-11–Cys-28, Cys-18–Cys-33, and Cys-27–Cys-39. Trp-17 carries the 6'-bromotryptophan modification. The residue at position 21 (Glu-21) is a 4-carboxyglutamate. Position 23 is a 4-hydroxyproline (Pro-23). 6'-bromotryptophan is present on residues Trp-37 and Trp-38. Pro-40 carries the post-translational modification 4-hydroxyproline. 6'-bromotryptophan is present on Trp-44.

Expressed by the venom duct.

It localises to the secreted. Functionally, mu-conotoxins block voltage-gated sodium channels. This toxin reversibly blocks voltage-gated sodium channel in cephalopods, with no alteration in the voltage dependence of sodium conductance or on the kinetics of inactivation. The sequence is that of Mu-conotoxin-like Cal 12.1.1d from Californiconus californicus (California cone).